The chain runs to 471 residues: Cysteine--tRNA ligase (471 aa).

C29 contributes to the Zn(2+) binding site. Residues 31–41 (PTVYNYIHIGN) carry the 'HIGH' region motif. Zn(2+) contacts are provided by C209, H234, and E238. The 'KMSKS' region signature appears at 266–270 (KMSKS). K269 provides a ligand contact to ATP.

The protein belongs to the class-I aminoacyl-tRNA synthetase family. Monomer. It depends on Zn(2+) as a cofactor.

It localises to the cytoplasm. It carries out the reaction tRNA(Cys) + L-cysteine + ATP = L-cysteinyl-tRNA(Cys) + AMP + diphosphate. The polypeptide is Cysteine--tRNA ligase (Listeria innocua serovar 6a (strain ATCC BAA-680 / CLIP 11262)).